We begin with the raw amino-acid sequence, 440 residues long: uncharacterized protein (440 aa).

The N-terminal stretch at 1–17 (MDRFFCTVWVWSVLFGA) is a signal peptide. Cys-18 carries the N-palmitoyl cysteine lipid modification. Residue Cys-18 is the site of S-diacylglycerol cysteine attachment. Residues 241–268 (SALQERPSSPEPVVSTIPSPEGEENSAA) form a disordered region.

It localises to the cell membrane. This is an uncharacterized protein from Treponema pallidum (strain Nichols).